The chain runs to 319 residues: MDTTEKALKEVTPAMLSLNNCPGTTPGTPMSKNQLKKQRKLAEFAELRKLRREREREKKKQKRREAKELGLPVRTGPSRKELKKRQLADGGKSGLSVAIDLDYDDLMQERDIVKCVKQCLRIYTINRRSPQPGNLHFTGIRRNGHIHESFKKNEGWENWHVQYYFDRGHTDIFEHSQLVYLTCESDRVLDKLQPGCTYVIGGLVDHNHFKGLCHSRATSAGLTTARLPLSEHVDMKTRAVLSTYHVFELLTKVAAGQDWTTAILETIPMRKGAKAKITDKKEPNHCLEQQDEKQKQEAESDKPTLTAVESEIESHSLDS.

Disordered regions lie at residues 16-87 and 275-319; these read LSLN…KRQL and AKIT…SLDS. The segment covering 17-33 has biased composition (polar residues); sequence SLNNCPGTTPGTPMSKN. The short motif at 35 to 42 is the Nuclear localization signal element; the sequence is LKKQRKLA. Basic and acidic residues-rich tracts occupy residues 40–58, 78–87, and 276–302; these read KLAE…EREK, SRKELKKRQL, and KITD…ESDK. Residues 44 to 67 are a coiled coil; that stretch reads FAELRKLRREREREKKKQKRREAK. Positions 83-274 constitute an SAM-dependent MTase TRM10-type domain; sequence KKRQLADGGK…ETIPMRKGAK (192 aa).

This sequence belongs to the class IV-like SAM-binding methyltransferase superfamily. TRM10 family.

The protein resides in the nucleus. It localises to the nucleolus. Its subcellular location is the chromosome. It catalyses the reaction guanosine(9) in tRNA + S-adenosyl-L-methionine = N(1)-methylguanosine(9) in tRNA + S-adenosyl-L-homocysteine + H(+). Its function is as follows. S-adenosyl-L-methionine-dependent guanine N(1)-methyltransferase that catalyzes the formation of N(1)-methylguanine at position 9 (m1G9) in tRNAs. Modulates Mettl3-mediated N6-methyladenosine (m6A) methylation of mRNA 5'-UTRs and 3'-UTRs independent of its methyltransferase activity; influences mRNA stability and protein levels, in particular of Hsp70 chaperone proteins and other stress response proteins. Also regulates stability of transcripts encoding proteins involved in signaling processes and proteins involved in neurogenesis and axon guidance pathways. This Drosophila melanogaster (Fruit fly) protein is tRNA (guanine(9)-N(1))-methyltransferase Trmt10A.